Here is a 454-residue protein sequence, read N- to C-terminus: Bifunctional protein GlmU (454 aa).

Positions 1-226 are pyrophosphorylase; it reads MALNVVILAA…AIEVEGANNR (226 aa). Residues 8–11, K22, Q73, 78–79, 100–102, G137, E151, N166, and N224 each bind UDP-N-acetyl-alpha-D-glucosamine; these read LAAG, GT, and YGD. Residue D102 participates in Mg(2+) binding. N224 serves as a coordination point for Mg(2+). The linker stretch occupies residues 227–247; that stretch reads VQLAQLERAYQAREAEKLMIA. Residues 248–454 form an N-acetyltransferase region; that stretch reads GANLRDPSRI…GWQRPVKIKK (207 aa). R330 and K348 together coordinate UDP-N-acetyl-alpha-D-glucosamine. The active-site Proton acceptor is H360. UDP-N-acetyl-alpha-D-glucosamine contacts are provided by Y363 and N374. Residues A377, 383–384, S402, A420, and R437 contribute to the acetyl-CoA site; that span reads NY.

This sequence in the N-terminal section; belongs to the N-acetylglucosamine-1-phosphate uridyltransferase family. In the C-terminal section; belongs to the transferase hexapeptide repeat family. In terms of assembly, homotrimer. Mg(2+) is required as a cofactor.

Its subcellular location is the cytoplasm. The catalysed reaction is alpha-D-glucosamine 1-phosphate + acetyl-CoA = N-acetyl-alpha-D-glucosamine 1-phosphate + CoA + H(+). It carries out the reaction N-acetyl-alpha-D-glucosamine 1-phosphate + UTP + H(+) = UDP-N-acetyl-alpha-D-glucosamine + diphosphate. Its pathway is nucleotide-sugar biosynthesis; UDP-N-acetyl-alpha-D-glucosamine biosynthesis; N-acetyl-alpha-D-glucosamine 1-phosphate from alpha-D-glucosamine 6-phosphate (route II): step 2/2. It functions in the pathway nucleotide-sugar biosynthesis; UDP-N-acetyl-alpha-D-glucosamine biosynthesis; UDP-N-acetyl-alpha-D-glucosamine from N-acetyl-alpha-D-glucosamine 1-phosphate: step 1/1. It participates in bacterial outer membrane biogenesis; LPS lipid A biosynthesis. Functionally, catalyzes the last two sequential reactions in the de novo biosynthetic pathway for UDP-N-acetylglucosamine (UDP-GlcNAc). The C-terminal domain catalyzes the transfer of acetyl group from acetyl coenzyme A to glucosamine-1-phosphate (GlcN-1-P) to produce N-acetylglucosamine-1-phosphate (GlcNAc-1-P), which is converted into UDP-GlcNAc by the transfer of uridine 5-monophosphate (from uridine 5-triphosphate), a reaction catalyzed by the N-terminal domain. The sequence is that of Bifunctional protein GlmU from Shewanella sp. (strain ANA-3).